The primary structure comprises 482 residues: MKFIVKPHPEIFVKSESVRKRFTKILERNIRTILQRRTESVAVFNRRDHIEVTSESDKYFKETLEVLTQTPGIHHSLEVQQSEFKDLHNIYEQVLERSGALIEGKTFSVRAKRRGKHDFTSIELERYVGGGLNQAVESAKVKLKNPDITVKVEVENDKLNQVIERHKGLGGFPLGTQEDLLSLISGGFDSGVSSYLHIKRGSKVHYCFFNLGGPAHEIGVKQVSHYLWDKYGSSAKVKFISIDFEPVVAEILENVEDGQMGVVLKRMFMRAGGMVAERFGIEALVTGEALGQVSSQTLTNLRHIDNVTDTLILRPLINWDKEDIIDLSRKIGTEDFAKVMPEYCGVISKKPTVKAKKGKLEAEEAKFNFEVLEQVIENARIMDIRDIEKESQEQAPEVEQVQAVAEHAVVLDIRSPDEEDESPLEIDGVEIKHIPFFKLSTQFGDLDQSKEYLLYCDRGVMSRLQALYLQEQGFHNVKVYRP.

A THUMP domain is found at 61–165 (KETLEVLTQT…NDKLNQVIER (105 aa)). Residues 183–184 (LI), lysine 265, glycine 287, and glutamine 296 each bind ATP. Cysteine 344 and cysteine 456 form a disulfide bridge. The Rhodanese domain maps to 404 to 482 (VAEHAVVLDI…GFHNVKVYRP (79 aa)). The active-site Cysteine persulfide intermediate is the cysteine 456.

The protein belongs to the ThiI family.

Its subcellular location is the cytoplasm. The catalysed reaction is [ThiI sulfur-carrier protein]-S-sulfanyl-L-cysteine + a uridine in tRNA + 2 reduced [2Fe-2S]-[ferredoxin] + ATP + H(+) = [ThiI sulfur-carrier protein]-L-cysteine + a 4-thiouridine in tRNA + 2 oxidized [2Fe-2S]-[ferredoxin] + AMP + diphosphate. It catalyses the reaction [ThiS sulfur-carrier protein]-C-terminal Gly-Gly-AMP + S-sulfanyl-L-cysteinyl-[cysteine desulfurase] + AH2 = [ThiS sulfur-carrier protein]-C-terminal-Gly-aminoethanethioate + L-cysteinyl-[cysteine desulfurase] + A + AMP + 2 H(+). It participates in cofactor biosynthesis; thiamine diphosphate biosynthesis. Functionally, catalyzes the ATP-dependent transfer of a sulfur to tRNA to produce 4-thiouridine in position 8 of tRNAs, which functions as a near-UV photosensor. Also catalyzes the transfer of sulfur to the sulfur carrier protein ThiS, forming ThiS-thiocarboxylate. This is a step in the synthesis of thiazole, in the thiamine biosynthesis pathway. The sulfur is donated as persulfide by IscS. The protein is tRNA sulfurtransferase of Vibrio atlanticus (strain LGP32) (Vibrio splendidus (strain Mel32)).